The chain runs to 202 residues: UPF0301 protein BCG_0069 (202 aa).

Belongs to the UPF0301 (AlgH) family.

The protein is UPF0301 protein BCG_0069 of Mycobacterium bovis (strain BCG / Pasteur 1173P2).